A 189-amino-acid chain; its full sequence is Mitochondrial FAD-linked sulfhydryl oxidase ERV1 (189 aa).

In terms of domain architecture, ERV/ALR sulfhydryl oxidase spans 83-183; it reads DPPDVEQLGR…FDCNFWEKRW (101 aa). Residues 88–95, His-99, and Tyr-128 each bind FAD; that span reads EQLGRSSW. Disulfide bonds link Cys-130–Cys-133 and Cys-159–Cys-176. FAD-binding positions include 159-171 and 182-183; these read CEAH…KLRK and RW.

In terms of assembly, homodimer. Interacts with MIA40, forming transient intermolecular disulfide bridges. FAD is required as a cofactor.

It localises to the mitochondrion intermembrane space. It catalyses the reaction 2 R'C(R)SH + O2 = R'C(R)S-S(R)CR' + H2O2. Functionally, FAD-dependent sulfhydryl oxidase that catalyzes disulfide bond formation. Required for the import and folding of small cysteine-containing proteins in the mitochondrial intermembrane space (IMS). Forms a redox cycle with MIA40 that involves a disulfide relay system. Important for maintaining the cysteine residues in MIA40 in an oxidized state. Reduced ERV1 is reoxidized by cytochrome c. Required for the maturation of cytoplasmic, but not of mitochondrial Fe/S proteins. This chain is Mitochondrial FAD-linked sulfhydryl oxidase ERV1 (ERV1), found in Saccharomyces cerevisiae (strain ATCC 204508 / S288c) (Baker's yeast).